A 150-amino-acid chain; its full sequence is 3-dehydroquinate dehydratase (150 aa).

The Proton acceptor role is filled by Y26. Positions 77, 83, and 90 each coordinate substrate. Residue H103 is the Proton donor of the active site. Residues 104–105 (LS) and R114 each bind substrate.

It belongs to the type-II 3-dehydroquinase family. As to quaternary structure, homododecamer.

The catalysed reaction is 3-dehydroquinate = 3-dehydroshikimate + H2O. It functions in the pathway metabolic intermediate biosynthesis; chorismate biosynthesis; chorismate from D-erythrose 4-phosphate and phosphoenolpyruvate: step 3/7. In terms of biological role, catalyzes a trans-dehydration via an enolate intermediate. This Pseudoalteromonas translucida (strain TAC 125) protein is 3-dehydroquinate dehydratase.